The primary structure comprises 124 residues: Fluoride-specific ion channel FluC (124 aa).

4 consecutive transmembrane segments (helical) span residues 4 to 24 (FLAV…LGLW), 34 to 54 (LGTL…LAWF), 67 to 87 (FVIT…AEVV), and 100 to 120 (LIAF…FYSL). Gly74 and Thr77 together coordinate Na(+).

This sequence belongs to the fluoride channel Fluc/FEX (TC 1.A.43) family.

The protein resides in the cell inner membrane. It carries out the reaction fluoride(in) = fluoride(out). With respect to regulation, na(+) is not transported, but it plays an essential structural role and its presence is essential for fluoride channel function. Fluoride-specific ion channel. Important for reducing fluoride concentration in the cell, thus reducing its toxicity. This is Fluoride-specific ion channel FluC from Thiobacillus denitrificans (strain ATCC 25259 / T1).